A 222-amino-acid chain; its full sequence is Salivary anticoagulant protein P23 (222 aa).

The signal sequence occupies residues 1-17; that stretch reads MLTVSLLTLSLAAYASA. Residues N56, N73, N109, and N114 are each glycosylated (N-linked (GlcNAc...) asparagine).

As to expression, salivary gland (at protein level). Adult midgut.

Its subcellular location is the secreted. Its function is as follows. Inhibits host coagulation by delaying thrombin generation and reducing endogenous thrombin potential (ETP). The polypeptide is Salivary anticoagulant protein P23 (Ixodes scapularis (Black-legged tick)).